A 401-amino-acid chain; its full sequence is Acetate kinase (401 aa).

Asn-7 is a binding site for Mg(2+). An ATP-binding site is contributed by Lys-14. Residue Arg-90 coordinates substrate. The Proton donor/acceptor role is filled by Asp-147. ATP-binding positions include 207-211, 282-284, and 331-335; these read HMGNG, DMR, and GIGEN. Glu-385 lines the Mg(2+) pocket.

Belongs to the acetokinase family. Homodimer. It depends on Mg(2+) as a cofactor. Mn(2+) serves as cofactor.

The protein localises to the cytoplasm. It carries out the reaction acetate + ATP = acetyl phosphate + ADP. The protein operates within metabolic intermediate biosynthesis; acetyl-CoA biosynthesis; acetyl-CoA from acetate: step 1/2. In terms of biological role, catalyzes the formation of acetyl phosphate from acetate and ATP. Can also catalyze the reverse reaction. In Clostridium acetobutylicum (strain ATCC 824 / DSM 792 / JCM 1419 / IAM 19013 / LMG 5710 / NBRC 13948 / NRRL B-527 / VKM B-1787 / 2291 / W), this protein is Acetate kinase.